A 357-amino-acid chain; its full sequence is Probable leucine aminopeptidase ARB_00576 (357 aa).

Residues 1–15 form the signal peptide; it reads MKVLAALALSALAMA. N76 carries an N-linked (GlcNAc...) asparagine glycan. 2 residues coordinate Zn(2+): H167 and D185. The segment at 169–188 is disordered; that stretch reads DSINGNNPQGEAPGADDNGS. N-linked (GlcNAc...) asparagine glycosylation occurs at N186. Residues E224 and D251 each coordinate Zn(2+). The N-linked (GlcNAc...) asparagine glycan is linked to N269. C291 and C295 are joined by a disulfide. Position 324 (H324) interacts with Zn(2+).

This sequence belongs to the peptidase M28 family. M28E subfamily. Monomer. Requires Zn(2+) as cofactor.

The protein resides in the secreted. In terms of biological role, probable extracellular aminopeptidase which contributes to pathogenicity. This chain is Probable leucine aminopeptidase ARB_00576, found in Arthroderma benhamiae (strain ATCC MYA-4681 / CBS 112371) (Trichophyton mentagrophytes).